A 197-amino-acid chain; its full sequence is Recombination protein RecR (197 aa).

Residues 57 to 72 (CSVCFGITEDDPCHLC) form a C4-type zinc finger. The region spanning 79 to 174 (TTICVVEEPQ…RVTRLAHGIP (96 aa)) is the Toprim domain.

The protein belongs to the RecR family.

May play a role in DNA repair. It seems to be involved in an RecBC-independent recombinational process of DNA repair. It may act with RecF and RecO. This Geotalea daltonii (strain DSM 22248 / JCM 15807 / FRC-32) (Geobacter daltonii) protein is Recombination protein RecR.